A 209-amino-acid polypeptide reads, in one-letter code: Ribosomal RNA large subunit methyltransferase E (209 aa).

Gly-63, Trp-65, Asp-83, Asp-99, and Asp-124 together coordinate S-adenosyl-L-methionine. Lys-164 acts as the Proton acceptor in catalysis.

Belongs to the class I-like SAM-binding methyltransferase superfamily. RNA methyltransferase RlmE family.

Its subcellular location is the cytoplasm. The enzyme catalyses uridine(2552) in 23S rRNA + S-adenosyl-L-methionine = 2'-O-methyluridine(2552) in 23S rRNA + S-adenosyl-L-homocysteine + H(+). In terms of biological role, specifically methylates the uridine in position 2552 of 23S rRNA at the 2'-O position of the ribose in the fully assembled 50S ribosomal subunit. The protein is Ribosomal RNA large subunit methyltransferase E of Aeromonas salmonicida (strain A449).